A 142-amino-acid polypeptide reads, in one-letter code: Neuritin (142 aa).

Positions 1-27 are cleaved as a signal peptide; it reads MGLTLSGRYISLFLAVQIAYLLQAVRA. Ala-112 carries the GPI-anchor amidated alanine lipid modification. Residues 113 to 142 constitute a propeptide, removed in mature form; it reads GGNGAIRSSVPFGVTLLITALSALVTWMQF.

The protein belongs to the neuritin family.

It is found in the cell membrane. Its subcellular location is the synapse. Modulates postsynaptic dendritic arbor elaboration and synaptic maturation. This chain is Neuritin (nrn1), found in Danio rerio (Zebrafish).